Reading from the N-terminus, the 719-residue chain is MLKIVKKLEVLMKYFVPNEVFSIRKLKVGTCSVLLAISILGSQGILSDEVVTSSSPMATKESSNAITNDLDNSPTVNQNRSAEMIASNSTTNGLDNSLSVNSISSNGTIRSNSQLDNRTVESTVTSTNENKSYKEDVISDRIIKKEFEDTALSVKDYGAVGDGIHDDRQAIQDAIDAAAQGLGGGNVYFPEGTYLVKEIVFLKSHTHLELNEKATILNGINIKNHPSIVFMTGLFTDDGAQVEWGPTEDISYSGGTIDMNGALNEEGTKAKNLPLINSSGAFAIGNSNNVTIKNVTFKDSYQGHAIQIAGSKNVLVDNSRFLGQALPKTMKDGQIISKESIQIEPLTRKGFPYALNDDGKKSENVTIQNSYFGKSDKSGELVTAIGTHYQTLSTQNPSNIKILNNHFDNMMYAGVRFTGFTDVLIKGNRFDKKVKGESVHYRESGAALVNAYSYKNTKDLLDLNKQVVIAENIFNIADPKTKAIRVAKDSAEYLGKVSDITVTKNVINNNSKETEQPNIELLRVSDNLVVSENSIFGGKEGIVIEDSKGKITVLNNQFYNLSGKYISFIKSNANGKEPVIRDSDGNFNIVTENGLYKIVTNNLSDKNEKEKNKEEKQSNSNNVIDSNQKNGEFNSSKDNRQMNDKIDNKQDNKTEEVNYKIVGDGRETENHINKSKEIVDVKQKLPKTGSNKIMELFLTVTGIGLLLTLKGLKYYGKDK.

The first 45 residues, 1 to 45, serve as a signal peptide directing secretion; it reads MLKIVKKLEVLMKYFVPNEVFSIRKLKVGTCSVLLAISILGSQGI. Disordered stretches follow at residues 56-76 and 109-128; these read PMATKESSNAITNDLDNSPTV and IRSNSQLDNRTVESTVTSTN. PbH1 repeat units lie at residues 287-310, 362-384, 397-419, 497-523, and 525-546; these read SNNVTIKNVTFKDSYQGHAIQIAG, SENVTIQNSYFGKSDKSGELVTA, PSNIKILNNHFDNMMYAGVRFTG, VSDITVTKNVINNNSKETEQPNIELLR, and SDNLVVSENSIFGGKEGIVIED. A coiled-coil region spans residues 601–658; it reads NNLSDKNEKEKNKEEKQSNSNNVIDSNQKNGEFNSSKDNRQMNDKIDNKQDNKTEEVN. Residues 606–617 are compositionally biased toward basic and acidic residues; the sequence is KNEKEKNKEEKQ. A disordered region spans residues 606–655; it reads KNEKEKNKEEKQSNSNNVIDSNQKNGEFNSSKDNRQMNDKIDNKQDNKTE. Positions 623–634 are enriched in polar residues; it reads VIDSNQKNGEFN. Over residues 635–655 the composition is skewed to basic and acidic residues; the sequence is SSKDNRQMNDKIDNKQDNKTE. Positions 685–689 match the LPXTG sorting signal motif; that stretch reads LPKTG. T688 carries the pentaglycyl murein peptidoglycan amidated threonine modification. Residues 689–719 constitute a propeptide, removed by sortase; it reads GSNKIMELFLTVTGIGLLLTLKGLKYYGKDK.

It is found in the secreted. Its subcellular location is the cell wall. In terms of biological role, acts as a fibronectin-dependent adhesin and invasin. Binds host (in this case human) fibronectin, plasmin, plasminogen, and human serum albumin. Where the bacteria adhere to human cells there is major recruitment of microvilli which seem to fuse to cover the streptococcal chains. Antibodies to this protein reduce bacterial growth in human blood. This Streptococcus pneumoniae (strain ATCC BAA-255 / R6) protein is Plasmin and fibronectin-binding protein A (pfbA).